Consider the following 738-residue polypeptide: Putative RNA-binding protein EEED8.10 (738 aa).

The RRM domain occupies 112 to 201; that stretch reads RKIVVSNISA…QVMVVSAYVS (90 aa). Positions 211–237 are disordered; the sequence is LSDDVGSREDTPLSRASSTQSLASGSE. Polar residues predominate over residues 224–237; the sequence is SRASSTQSLASGSE. In terms of domain architecture, F-box spans 239-297; the sequence is SFNLGNVPDKILRRVISFLPIHETIRLERVNKKFMEESIKSWELVNKIALARETVFNKQ.

This is Putative RNA-binding protein EEED8.10 from Caenorhabditis elegans.